Here is an 885-residue protein sequence, read N- to C-terminus: Chitin synthase 3 (885 aa).

The interval 1–59 (MASQYPGHQLDDIPSTNVYRPPPRHEDDEAEHALLHQNSAYQSQYDDPHSRPLTPGQES) is disordered. Residues 23 to 34 (PRHEDDEAEHAL) are compositionally biased toward basic and acidic residues. Polar residues predominate over residues 36 to 45 (HQNSAYQSQY). 6 helical membrane-spanning segments follow: residues 565 to 585 (FFLH…WFSL), 620 to 640 (IINT…FILA), 650 to 670 (VAYI…IVLS), 707 to 727 (IVII…FLYM), 735 to 755 (SFAQ…IYAF), and 837 to 857 (LVAT…SDSL).

It belongs to the chitin synthase family. Class III subfamily.

The protein localises to the cell membrane. The catalysed reaction is [(1-&gt;4)-N-acetyl-beta-D-glucosaminyl](n) + UDP-N-acetyl-alpha-D-glucosamine = [(1-&gt;4)-N-acetyl-beta-D-glucosaminyl](n+1) + UDP + H(+). Polymerizes chitin, a structural polymer of the cell wall and septum, by transferring the sugar moiety of UDP-GlcNAc to the non-reducing end of the growing chitin polymer. Is not only stable at different pH, but is also able to tolerate a broad temperature range. With CHS2, plays an important role in virulence. The chain is Chitin synthase 3 from Exophiala dermatitidis (Black yeast-like fungus).